The sequence spans 266 residues: MQGSTRRAGAMTDVHRRFLQLLMTHGVLEEWEVRRLQNHCYQVHDRNATVDKLEDFINNINSVLESLYIEIKKGVTEDDGRPIYALVNLATTSVSKMATDFAENELDLFRKALELIVDSETGFASSTNILNLVDQLKGKKMRKKEAEQVLQKFVQSKWLIEKEGEFTLHGRAILEMEQFIRESYPDSVKMCNICHGLLIQGQSCETCGIRMHLPCVAKYFQSIPEPHCPHCNDYWPHDIPEVYNPEKEREAGISKSSRKSLRTRQH.

Positions 1 to 102 (MQGSTRRAGA…SVSKMATDFA (102 aa)) are interaction with NSMCE3. The RING-type; atypical zinc finger occupies 191–232 (CNICHGLLIQGQSCETCGIRMHLPCVAKYFQSIPEPHCPHCN). A disordered region spans residues 246–266 (EKEREAGISKSSRKSLRTRQH). Positions 256 to 266 (SSRKSLRTRQH) are enriched in basic residues.

Belongs to the NSE1 family. In terms of assembly, component of the SMC5-SMC6 complex which consists at least of SMC5, SMC6, NSMCE2, NSMCE1, NSMCE4A or EID3 and NSMCE3. NSMCE1, NSMCE4A or EID3 and NSMCE3 probably form a subcomplex that bridges the head domains of the SMC5-SMC6 heterodimer. Interacts with NSMCE3. Ubiquitinated.

The protein resides in the nucleus. The protein localises to the chromosome. It localises to the telomere. It carries out the reaction S-ubiquitinyl-[E2 ubiquitin-conjugating enzyme]-L-cysteine + [acceptor protein]-L-lysine = [E2 ubiquitin-conjugating enzyme]-L-cysteine + N(6)-ubiquitinyl-[acceptor protein]-L-lysine.. Its function is as follows. RING-type zinc finger-containing E3 ubiquitin ligase that assembles with melanoma antigen protein (MAGE) to catalyze the direct transfer of ubiquitin from E2 ubiquitin-conjugating enzyme to a specific substrate. Within MAGE-RING ubiquitin ligase complex, MAGE stimulates and specifies ubiquitin ligase activity likely through recruitment and/or stabilization of the E2 ubiquitin-conjugating enzyme at the E3:substrate complex. Involved in maintenance of genome integrity, DNA damage response and DNA repair. NSMCE3/MAGEG1 and NSMCE1 ubiquitin ligase are components of SMC5-SMC6 complex and may positively regulate homologous recombination-mediated DNA repair. This chain is Non-structural maintenance of chromosomes element 1 homolog (Nsmce1), found in Mus musculus (Mouse).